The chain runs to 38 residues: Zinc-containing ferredoxin (38 aa).

The segment covering 1-11 (GIDPNFRTSRP) has biased composition (polar residues). The interval 1-38 (GIDPNFRTSRPVTGDHAGHKVYAPADPPVKEKALGIHG) is disordered. The interval 1–38 (GIDPNFRTSRPVTGDHAGHKVYAPADPPVKEKALGIHG) is N-terminal extension. Residues histidine 16 and histidine 19 each coordinate Zn(2+). A compositionally biased stretch (basic and acidic residues) spans 28–38 (PVKEKALGIHG). Lysine 30 is subject to N6-methyllysine. Histidine 37 lines the Zn(2+) pocket.

It depends on [3Fe-4S] cluster as a cofactor. The cofactor is [4Fe-4S] cluster. Zn(2+) is required as a cofactor.

Ferredoxins are iron-sulfur proteins that transfer electrons in a wide variety of metabolic reactions. This is Zinc-containing ferredoxin (zfx) from Metallosphaera prunae.